The chain runs to 160 residues: Small ribosomal subunit protein uS7 (160 aa).

Belongs to the universal ribosomal protein uS7 family. As to quaternary structure, part of the 30S ribosomal subunit. Contacts proteins S9 and S11.

Functionally, one of the primary rRNA binding proteins, it binds directly to 16S rRNA where it nucleates assembly of the head domain of the 30S subunit. Is located at the subunit interface close to the decoding center, probably blocks exit of the E-site tRNA. This Rickettsia typhi (strain ATCC VR-144 / Wilmington) protein is Small ribosomal subunit protein uS7.